We begin with the raw amino-acid sequence, 80 residues long: U-Asilidin(1)-Dg12 (80 aa).

A signal peptide spans 1–24; it reads MARLLVVSVGVFLAVIMLSSETMS. The propeptide occupies 25–46; sequence LPAGENLPALTLFEAQNQLIGL. 3 disulfide bridges follow: C53–C67, C60–C71, and C66–C78.

Belongs to the asilidin-1 family. Expressed by the venom gland.

The protein resides in the secreted. Neurotoxin that may modulate ions channels (other than those tested). In vivo, induces neurotoxic effects when injected into insects (tested on L.cuprina and A.domesticus). This Dolopus genitalis (Giant Australian assassin fly) protein is U-Asilidin(1)-Dg12.